Reading from the N-terminus, the 150-residue chain is 3-dehydroquinate dehydratase (150 aa).

Y26 serves as the catalytic Proton acceptor. The substrate site is built by N75, H81, and D88. H101 (proton donor) is an active-site residue. Substrate contacts are provided by residues 102 to 103 (LS) and R112.

The protein belongs to the type-II 3-dehydroquinase family. Homododecamer.

It catalyses the reaction 3-dehydroquinate = 3-dehydroshikimate + H2O. The protein operates within metabolic intermediate biosynthesis; chorismate biosynthesis; chorismate from D-erythrose 4-phosphate and phosphoenolpyruvate: step 3/7. Its function is as follows. Catalyzes a trans-dehydration via an enolate intermediate. This chain is 3-dehydroquinate dehydratase, found in Shewanella loihica (strain ATCC BAA-1088 / PV-4).